Here is a 365-residue protein sequence, read N- to C-terminus: Annexin B22 (365 aa).

Annexin repeat units follow at residues 34-105 (FSAS…QLIV), 106-185 (DTPY…SLVQ), 211-283 (ELAE…AVLR), and 287-358 (DRPS…VLMG). The Ca(2+) site is built by Met47, Gly49, Gly51, Thr52, Glu54, Asp91, Met119, Gly121, Gly123, Asp126, Lys169, Glu171, Thr172, Glu177, Asp273, Met300, Gly302, Leu303, Gly304, and Asp344.

Belongs to the annexin family. In terms of assembly, homodimer.

It localises to the tegument. The protein localises to the secreted. The protein resides in the extracellular exosome. Its subcellular location is the host cell. In terms of biological role, involved in reproduction of the worm. Involved in host-parasite interaction. Delivered into the host cell by means of parasite exosomes. Binds to acidic phospholipid membranes in a calcium-dependent manner in vitro. Causes aggregation of liposomes in the presence of calcium, but not in its absence. Likely to promote membrane fusion. May provide structural integrity within the tegument. The protein is Annexin B22 of Schistosoma mansoni (Blood fluke).